The chain runs to 1016 residues: UvrABC system protein A (1016 aa).

32-39 (GVSGSGKS) is an ATP binding site. The C4-type zinc-finger motif lies at 259–286 (CPEHGSVLEELEPRSFSFNSPYGACGDC). ABC transporter domains follow at residues 315-627 (WTKK…KNSL) and 647-975 (GNGK…EYLR). 679–686 (GPSGSGKS) is an ATP binding site. The segment at 778 to 804 (CEHCKGDGVMKIEMNFLPDIYVPCEVC) adopts a C4-type zinc-finger fold. The disordered stretch occupies residues 984-1016 (EPRARGEKAEKPAKAKAPAKKRTKKQTELVEAD). The span at 985–996 (PRARGEKAEKPA) shows a compositional bias: basic and acidic residues.

Belongs to the ABC transporter superfamily. UvrA family. Forms a heterotetramer with UvrB during the search for lesions.

It is found in the cytoplasm. Its function is as follows. The UvrABC repair system catalyzes the recognition and processing of DNA lesions. UvrA is an ATPase and a DNA-binding protein. A damage recognition complex composed of 2 UvrA and 2 UvrB subunits scans DNA for abnormalities. When the presence of a lesion has been verified by UvrB, the UvrA molecules dissociate. The polypeptide is UvrABC system protein A (Deinococcus radiodurans (strain ATCC 13939 / DSM 20539 / JCM 16871 / CCUG 27074 / LMG 4051 / NBRC 15346 / NCIMB 9279 / VKM B-1422 / R1)).